The following is a 376-amino-acid chain: 26S proteasome non-ATPase regulatory subunit 13 (376 aa).

The 168-residue stretch at 171–338 (SYYKDALRFL…KRVHMTWVQP (168 aa)) folds into the PCI domain. The residue at position 298 (K298) is an N6-acetyllysine.

It belongs to the proteasome subunit S11 family. Component of the 19S proteasome regulatory particle complex. The 26S proteasome consists of a 20S core particle (CP) and two 19S regulatory subunits (RP). The regulatory particle is made of a lid composed of 9 subunits including PSMD13, a base containing 6 ATPases and few additional components.

In terms of biological role, component of the 26S proteasome, a multiprotein complex involved in the ATP-dependent degradation of ubiquitinated proteins. This complex plays a key role in the maintenance of protein homeostasis by removing misfolded or damaged proteins, which could impair cellular functions, and by removing proteins whose functions are no longer required. Therefore, the proteasome participates in numerous cellular processes, including cell cycle progression, apoptosis, or DNA damage repair. The polypeptide is 26S proteasome non-ATPase regulatory subunit 13 (PSMD13) (Homo sapiens (Human)).